The chain runs to 398 residues: Acetate kinase (398 aa).

N7 contributes to the Mg(2+) binding site. Residue K14 coordinates ATP. R91 contributes to the substrate binding site. The Proton donor/acceptor role is filled by D148. Residues H208–G212, D283–R285, and G331–N335 each bind ATP. E384 contacts Mg(2+).

The protein belongs to the acetokinase family. Homodimer. Requires Mg(2+) as cofactor. It depends on Mn(2+) as a cofactor.

The protein localises to the cytoplasm. The catalysed reaction is acetate + ATP = acetyl phosphate + ADP. The protein operates within metabolic intermediate biosynthesis; acetyl-CoA biosynthesis; acetyl-CoA from acetate: step 1/2. Functionally, catalyzes the formation of acetyl phosphate from acetate and ATP. Can also catalyze the reverse reaction. The sequence is that of Acetate kinase from Halothermothrix orenii (strain H 168 / OCM 544 / DSM 9562).